The primary structure comprises 919 residues: Motility hub protein FimV (919 aa).

The first 24 residues, 1 to 24 (MVRLRTLVRAIAAASVLTSGMAHG), serve as a signal peptide directing secretion. Low complexity predominate over residues 140–171 (ASAPQAPVSAPRATGAPRAPQAPAPVRTTAPA). Disordered stretches follow at residues 140-177 (ASAP…DTYR) and 237-312 (ERSP…KGDS). Positions 174 to 229 (DTYRTVSNDTLWEIAQRNRTDRVSVPQAMLAFQELNPGAFVDGNINRLKSGQVLRI) constitute a LysM domain. The span at 245–256 (SQVQAQNQSWRG) shows a compositional bias: polar residues. Basic and acidic residues predominate over residues 299-312 (KASKGADKGGKGDS). Residues 319–367 (LAVTKESLDSTRRENEELQSRMQDLQSQLDKLQKLIQLKDAQLAKLQGQ) adopt a coiled-coil conformation. Residues 372–445 (GQGAAQPNAA…APAVPAPAPV (74 aa)) form a disordered region. Positions 390–417 (AAAQAPAQPGTPAAAAPTPAPAGEAPAA) are enriched in low complexity. Residues 418-443 (PAQPPVAPPPAPAAEKPPAPAVPAPA) show a composition bias toward pro residues. A helical transmembrane segment spans residues 464–484 (LWLAVIGGSALLALLVLLMIL). Residues 785–816 (AEEPALSLPDDFDLSLADEPTEPAAPEKGEDS) form a disordered region.

As to quaternary structure, interacts with FimL. Interacts with DgcP.

The protein resides in the cell inner membrane. Inner membrane hub protein that plays both cAMP-dependent and cAMP-independent roles in twitching motility. Regulates intracellular cyclic AMP (cAMP) levels through the activation of adenylate cyclase CyaB. Plays an essential role in a number of virulence mechanisms including type IV pilus (T4P)-mediated assembly and twitching motility as well as cAMP-dependent virulence gene expression. Also mediates type II secretion (T2S) of lipases and proteases. In addition, mediates the cAMP-independent localization of multiple T4P structural and regulatory components to the cell poles. This role in directing proteins to the cell pole is not restricted to type IV component and involves other proteins such as the diguanylate cyclase DgcP. This Pseudomonas aeruginosa (strain ATCC 15692 / DSM 22644 / CIP 104116 / JCM 14847 / LMG 12228 / 1C / PRS 101 / PAO1) protein is Motility hub protein FimV (fimV).